Reading from the N-terminus, the 348-residue chain is Anthranilate phosphoribosyltransferase (348 aa).

5-phospho-alpha-D-ribose 1-diphosphate-binding positions include Gly-89, 92-93 (GD), Thr-97, 99-102 (NIST), 117-125 (KHGNRSASS), and Ser-129. Gly-89 lines the anthranilate pocket. Position 101 (Ser-101) interacts with Mg(2+). Asn-120 contributes to the anthranilate binding site. Anthranilate is bound at residue Arg-175. Residues Asp-234 and Glu-235 each contribute to the Mg(2+) site.

The protein belongs to the anthranilate phosphoribosyltransferase family. In terms of assembly, homodimer. The cofactor is Mg(2+).

It catalyses the reaction N-(5-phospho-beta-D-ribosyl)anthranilate + diphosphate = 5-phospho-alpha-D-ribose 1-diphosphate + anthranilate. It participates in amino-acid biosynthesis; L-tryptophan biosynthesis; L-tryptophan from chorismate: step 2/5. Functionally, catalyzes the transfer of the phosphoribosyl group of 5-phosphorylribose-1-pyrophosphate (PRPP) to anthranilate to yield N-(5'-phosphoribosyl)-anthranilate (PRA). The chain is Anthranilate phosphoribosyltransferase from Synechocystis sp. (strain ATCC 27184 / PCC 6803 / Kazusa).